The following is a 400-amino-acid chain: 1-deoxy-D-xylulose 5-phosphate reductoisomerase (400 aa).

Positions 17, 18, 19, 20, and 131 each coordinate NADPH. Residue lysine 132 participates in 1-deoxy-D-xylulose 5-phosphate binding. Glutamate 133 provides a ligand contact to NADPH. Aspartate 157 contacts Mn(2+). 1-deoxy-D-xylulose 5-phosphate is bound by residues serine 158, glutamate 159, serine 188, and histidine 211. Glutamate 159 provides a ligand contact to Mn(2+). Glycine 217 is an NADPH binding site. 1-deoxy-D-xylulose 5-phosphate-binding residues include serine 224, asparagine 229, lysine 230, and glutamate 233. Glutamate 233 contributes to the Mn(2+) binding site.

It belongs to the DXR family. Mg(2+) serves as cofactor. The cofactor is Mn(2+).

It catalyses the reaction 2-C-methyl-D-erythritol 4-phosphate + NADP(+) = 1-deoxy-D-xylulose 5-phosphate + NADPH + H(+). Its pathway is isoprenoid biosynthesis; isopentenyl diphosphate biosynthesis via DXP pathway; isopentenyl diphosphate from 1-deoxy-D-xylulose 5-phosphate: step 1/6. Catalyzes the NADPH-dependent rearrangement and reduction of 1-deoxy-D-xylulose-5-phosphate (DXP) to 2-C-methyl-D-erythritol 4-phosphate (MEP). This chain is 1-deoxy-D-xylulose 5-phosphate reductoisomerase, found in Pseudomonas putida (strain ATCC 700007 / DSM 6899 / JCM 31910 / BCRC 17059 / LMG 24140 / F1).